A 330-amino-acid chain; its full sequence is D-alanine--D-alanine ligase (330 aa).

Positions 122–323 (NRFLSGFGIR…MKEVLCTIIR (202 aa)) constitute an ATP-grasp domain. 151–206 (IARMGLPLFVKPNVGGSSIATTKVVEAAQLLPAIEQAFSEGEEVMIERLICGTEVT) is an ATP binding site. Mg(2+)-binding residues include Asp277, Glu290, and Asn292.

The protein belongs to the D-alanine--D-alanine ligase family. The cofactor is Mg(2+). Requires Mn(2+) as cofactor.

Its subcellular location is the cytoplasm. The enzyme catalyses 2 D-alanine + ATP = D-alanyl-D-alanine + ADP + phosphate + H(+). The protein operates within cell wall biogenesis; peptidoglycan biosynthesis. Cell wall formation. This chain is D-alanine--D-alanine ligase, found in Porphyromonas gingivalis (strain ATCC BAA-308 / W83).